Consider the following 235-residue polypeptide: Orotidine 5'-phosphate decarboxylase (235 aa).

Substrate-binding positions include Asp-17, Lys-39, 66-75, Thr-121, Arg-182, Gln-191, Gly-211, and Arg-212; that span reads DLKLHDIGNT. Lys-68 acts as the Proton donor in catalysis.

The protein belongs to the OMP decarboxylase family. Type 1 subfamily. As to quaternary structure, homodimer.

The catalysed reaction is orotidine 5'-phosphate + H(+) = UMP + CO2. Its pathway is pyrimidine metabolism; UMP biosynthesis via de novo pathway; UMP from orotate: step 2/2. Catalyzes the decarboxylation of orotidine 5'-monophosphate (OMP) to uridine 5'-monophosphate (UMP). The chain is Orotidine 5'-phosphate decarboxylase from Rhodopseudomonas palustris (strain BisB5).